The sequence spans 266 residues: Basic endochitinase C (266 aa).

Positions 1 to 23 (MRSLAVVVAVVATVAMAIGTAHG) are cleaved as a signal peptide. 3 cysteine pairs are disulfide-bonded: Cys-46/Cys-108, Cys-120/Cys-128, and Cys-246/Cys-259. The Proton donor role is filled by Glu-90.

It belongs to the glycosyl hydrolase 19 family. Chitinase class II subfamily. As to expression, localized to the starchy endoderm of the seed May localize to other parts of the seed including the aleurone cells (at protein level).

It catalyses the reaction Random endo-hydrolysis of N-acetyl-beta-D-glucosaminide (1-&gt;4)-beta-linkages in chitin and chitodextrins.. Functionally, defense against chitin-containing fungal pathogens. Binds the hyphal tips of fungi and degrades nascent chitin. The protein is Basic endochitinase C of Secale cereale (Rye).